The following is a 413-amino-acid chain: Gamma-glutamyl phosphate reductase (413 aa).

This sequence belongs to the gamma-glutamyl phosphate reductase family.

It localises to the cytoplasm. The catalysed reaction is L-glutamate 5-semialdehyde + phosphate + NADP(+) = L-glutamyl 5-phosphate + NADPH + H(+). The protein operates within amino-acid biosynthesis; L-proline biosynthesis; L-glutamate 5-semialdehyde from L-glutamate: step 2/2. Catalyzes the NADPH-dependent reduction of L-glutamate 5-phosphate into L-glutamate 5-semialdehyde and phosphate. The product spontaneously undergoes cyclization to form 1-pyrroline-5-carboxylate. The polypeptide is Gamma-glutamyl phosphate reductase (Salinispora arenicola (strain CNS-205)).